We begin with the raw amino-acid sequence, 213 residues long: Small ribosomal subunit protein uS3 (213 aa).

Residues 38-106 (IRKYVKKTLY…EFSIEVNEIR (69 aa)) form the KH type-2 domain.

This sequence belongs to the universal ribosomal protein uS3 family. Part of the 30S ribosomal subunit. Forms a tight complex with proteins S10 and S14.

In terms of biological role, binds the lower part of the 30S subunit head. Binds mRNA in the 70S ribosome, positioning it for translation. The chain is Small ribosomal subunit protein uS3 from Oleidesulfovibrio alaskensis (strain ATCC BAA-1058 / DSM 17464 / G20) (Desulfovibrio alaskensis).